Reading from the N-terminus, the 393-residue chain is Prokineticin receptor 1 (393 aa).

The Extracellular segment spans residues 1 to 62 (METTMGFMDD…TNSRTFFAAK (62 aa)). Residues asparagine 11, asparagine 14, and asparagine 36 are each glycosylated (N-linked (GlcNAc...) asparagine). A helical transmembrane segment spans residues 63–83 (IVIGMALVGIMLVCGIGNFIF). Residues 84–98 (IAALVRYKKLRNLTN) are Cytoplasmic-facing. Residues 99 to 119 (LLIANLAISDFLVAIVCCPFE) traverse the membrane as a helical segment. Residues 120–146 (MDYYVVRQLSWEHGHVLCTSVNYLRTV) are Extracellular-facing. A disulfide bridge connects residues cysteine 137 and cysteine 217. Residues 147-167 (SLYVSTNALLAIAIDRYLAIV) traverse the membrane as a helical segment. Residues 168 to 180 (HPLRPRMKCQTAT) lie on the Cytoplasmic side of the membrane. Residues 181 to 201 (GLIALVWTVSILIAIPSAYFT) traverse the membrane as a helical segment. The Extracellular segment spans residues 202–232 (TETVLVIVKSQEKIFCGQIWPVDQQLYYKSY). The chain crosses the membrane as a helical span at residues 233-253 (FLFIFGIEFVGPVVTMTLCYA). Residues 254–282 (RISRELWFKAVPGFQTEQIRKRLRCRRKT) are Cytoplasmic-facing. The helical transmembrane segment at 283-303 (VLVLMCILTAYVLCWAPFYGF) threads the bilayer. The Extracellular portion of the chain corresponds to 304-322 (TIVRDFFPTVFVKEKHYLT). A helical transmembrane segment spans residues 323-343 (AFYIVECIAMSNSMINTLCFV). Topologically, residues 344 to 393 (TVKNDTVKYFKKIMLLHWKASYNGGKSSADLDLKTIGMPATEEVDCIRLK) are cytoplasmic.

Belongs to the G-protein coupled receptor 1 family. As to expression, localizes to glandular epithelium, stroma and vascular endothelial cells of first trimester decidua (at protein level). Up-regulated in first trimester decidua when compared with non-pregnant endometrium. Expressed in the stomach, throughout the small intestine, colon, rectum, thyroid gland, pituitary gland, salivary gland, adrenal gland, testis, ovary, brain, spleen, prostate and pancreas.

The protein resides in the cell membrane. Receptor for prokineticin 1. Exclusively coupled to the G(q) subclass of heteromeric G proteins. Activation leads to mobilization of calcium, stimulation of phosphoinositide turnover and activation of p44/p42 mitogen-activated protein kinase. May play a role during early pregnancy. The sequence is that of Prokineticin receptor 1 (PROKR1) from Homo sapiens (Human).